The sequence spans 440 residues: MDGEMTASPPDISACDTSAVDEQTGQSGQSQAPIPKDIAYHTLTKALLFPDIDQYQHWHHVAPMLAKMLVDGKYSIHQQYEYLCLFAQLVAPVLGPYPSPGRDVYRCTLGGNMTVELSQNFQRSGSTTRIAFEPVRYQASVGHDRFNRTSVNAFFSQLQLLVKSVNIELHHLLSEHLTLTAKDERNLNEEQLTKYLTNFQVKTQYVVALDLRKTGIVAKEYFFPGIKCAATGQTGSNACFGAIRAVDKDGHLDSLCQLIEAHFQQSKIDDAFLCCDLVDPAHTRFKVYIADPLVTLARAEEHWTLGGRLTDEDAAVGLEIIRGLWSELGIIQGPLEPSAMMEKGLLPIMLNYEMKAGQRLPKPKLYMPLTGIPETKIARIMTAFFQRHDMPEQAEVFMENLQAYYEGKNLEEATRYQAWLSFAYTKEKGPYLSIYYFWPE.

The interval 1–33 is disordered; it reads MDGEMTASPPDISACDTSAVDEQTGQSGQSQAP. A compositionally biased stretch (polar residues) spans 20–32; sequence VDEQTGQSGQSQA. Residues Thr108 and Glu116 each coordinate substrate. Residues Arg129, Lys219, and Tyr221 each coordinate dimethylallyl diphosphate. Phe223 contacts substrate. The dimethylallyl diphosphate site is built by Lys286, Tyr288, Tyr366, Tyr431, and Tyr435.

This sequence belongs to the tryptophan dimethylallyltransferase family.

The enzyme catalyses harmol + dimethylallyl diphosphate = 6-(3-dimethylallyl)harmol + diphosphate. It catalyses the reaction an N-terminal L-tryptophanyl-L-alpha-aminoacyl-[peptide] + H2O = an N-terminal L-alpha-aminoacyl-[peptide] + L-tryptophan. The catalysed reaction is (R)-benzodiazepinedione + dimethylallyl diphosphate = (2S,3R,11R)-aszonalenin + diphosphate. It carries out the reaction (S)-benzodiazepinedione + dimethylallyl diphosphate = (2S,3R,11S)-aszonalenin + diphosphate. Prenyltransferase that catalyzes reverse prenylation at position N-1 of tryptophan-containing cyclic dipeptides. Accepts only dimethylallyl diphosphate (DMAPP) as the prenyl donor but shows broad substrate specificities toward its aromatic substrates. Also shows tryptophan aminopeptidase activity with preference for linear peptides containing a tryptophanyl moiety at the N-terminus. The polypeptide is Cyclic dipeptide prenyltransferase (Aspergillus fumigatus (Neosartorya fumigata)).